Here is a 256-residue protein sequence, read N- to C-terminus: Major prion protein (256 aa).

The first 24 residues, methionine 1–cysteine 24, serve as a signal peptide directing secretion. The tract at residues lysine 25–alanine 233 is interaction with GRB2, ERI3 and SYN1. A disordered region spans residues proline 28–threonine 110. 5 repeat units span residues proline 54–glutamine 62, proline 63–glutamine 70, proline 71–glutamine 78, proline 79–glutamine 86, and proline 87–glutamine 95. Residues proline 54 to glutamine 95 are 5 X 8 AA tandem repeats of P-H-G-G-G-W-G-Q. The segment covering glutamine 55–glycine 97 has biased composition (gly residues). Cu(2+) is bound by residues histidine 64, glycine 65, glycine 66, histidine 72, glycine 73, glycine 74, histidine 80, glycine 81, glycine 82, histidine 88, glycine 90, and glycine 91. The cysteines at positions 182 and 217 are disulfide-linked. N-linked (GlcNAc...) asparagine glycans are attached at residues asparagine 184 and asparagine 200. Alanine 233 is lipidated: GPI-anchor amidated alanine. The propeptide at serine 234–glycine 256 is removed in mature form.

This sequence belongs to the prion family. Monomer and homodimer. Has a tendency to aggregate into amyloid fibrils containing a cross-beta spine, formed by a steric zipper of superposed beta-strands. Soluble oligomers may represent an intermediate stage on the path to fibril formation. Copper binding may promote oligomerization. Interacts with GRB2, APP, ERI3/PRNPIP and SYN1. Mislocalized cytosolically exposed PrP interacts with MGRN1; this interaction alters MGRN1 subcellular location and causes lysosomal enlargement. Interacts with KIAA1191.

Its subcellular location is the cell membrane. It is found in the golgi apparatus. Its function is as follows. Its primary physiological function is unclear. Has cytoprotective activity against internal or environmental stresses. May play a role in neuronal development and synaptic plasticity. May be required for neuronal myelin sheath maintenance. May play a role in iron uptake and iron homeostasis. Soluble oligomers are toxic to cultured neuroblastoma cells and induce apoptosis (in vitro). Association with GPC1 (via its heparan sulfate chains) targets PRNP to lipid rafts. Also provides Cu(2+) or Zn(2+) for the ascorbate-mediated GPC1 deaminase degradation of its heparan sulfate side chains. In Odocoileus hemionus (Mule deer), this protein is Major prion protein (PRNP).